Here is a 290-residue protein sequence, read N- to C-terminus: Phycobilisome 32.3 kDa linker polypeptide, phycocyanin-associated, rod (290 aa).

Residues 1–179 (MPVTVAASRL…LQRGYANSDR (179 aa)) form the PBS-linker domain. The region spanning 236 to 288 (DQVVRVEVAALSTPRYPRIRRSSRVFFVPVSRLSQKLQEIQRMGGRVASISPA) is the CpcD-like domain.

It belongs to the phycobilisome linker protein family.

It is found in the cellular thylakoid membrane. Functionally, rod linker protein, associated with phycocyanin. Linker polypeptides determine the state of aggregation and the location of the disk-shaped phycobiliprotein units within the phycobilisome and modulate their spectroscopic properties in order to mediate a directed and optimal energy transfer. This chain is Phycobilisome 32.3 kDa linker polypeptide, phycocyanin-associated, rod (cpcC), found in Picosynechococcus sp. (strain ATCC 27264 / PCC 7002 / PR-6) (Agmenellum quadruplicatum).